A 131-amino-acid polypeptide reads, in one-letter code: Small ribosomal subunit protein uS9 (131 aa).

It belongs to the universal ribosomal protein uS9 family.

The chain is Small ribosomal subunit protein uS9 from Haemophilus ducreyi (strain 35000HP / ATCC 700724).